Consider the following 309-residue polypeptide: 2-phospho-L-lactate transferase (309 aa).

Residues aspartate 50 and lysine 89 each contribute to the 7,8-didemethyl-8-hydroxy-5-deazariboflavin site.

This sequence belongs to the CofD family. In terms of assembly, homodimer. It depends on Mg(2+) as a cofactor.

It carries out the reaction (2S)-lactyl-2-diphospho-5'-guanosine + 7,8-didemethyl-8-hydroxy-5-deazariboflavin = oxidized coenzyme F420-0 + GMP + H(+). It participates in cofactor biosynthesis; coenzyme F420 biosynthesis. Catalyzes the transfer of the 2-phospholactate moiety from (2S)-lactyl-2-diphospho-5'-guanosine to 7,8-didemethyl-8-hydroxy-5-deazariboflavin (FO) with the formation of oxidized coenzyme F420-0 and GMP. In Methanococcus maripaludis (strain C6 / ATCC BAA-1332), this protein is 2-phospho-L-lactate transferase.